Here is a 1101-residue protein sequence, read N- to C-terminus: Protein diaphanous homolog 2 (1101 aa).

Met-1 is modified (N-acetylmethionine). The segment at 1–44 is disordered; it reads MEQPGAAASGAGGGSEEPGGGRSNKRSAGNRAANEEETKNKPKL. Over residues 10 to 22 the composition is skewed to gly residues; the sequence is GAGGGSEEPGGGR. The region spanning 98–464 is the GBD/FH3 domain; the sequence is SLNLSEKEVL…QIVLHCSGMD (367 aa). Coiled coils occupy residues 366 to 418 and 487 to 547; these read KEKE…MLKD and KAKV…SSSG. Polar residues predominate over residues 536–546; it reads RTQAQVLSSSS. 3 disordered regions span residues 536-594, 1010-1048, and 1070-1101; these read RTQA…PPPP, NKRREMEEKTRRAKLAKEKAEQEKLERQKKKKQLIDINK, and RDRRKRIPRNPDNRRVPLERSRSRHNGAISSK. Residues 549 to 594 are compositionally biased toward pro residues; it reads PGPPAAPPLPGVGPPPPPPAPPLPGGAPLPPPPPPLPGMMGIPPPP. The FH1 domain maps to 549–623; sequence PGPPAAPPLP…PPPGISLNLP (75 aa). The FH2 domain maps to 628-1028; it reads QKKMYKPEVS…TRRAKLAKEK (401 aa). Residues 903–1053 are a coiled coil; the sequence is SASKVSAQIL…IDINKEGDET (151 aa). Composition is skewed to basic and acidic residues over residues 1010 to 1035 and 1078 to 1090; these read NKRREMEEKTRRAKLAKEKAEQEKLE and RNPDNRRVPLERS. In terms of domain architecture, DAD spans 1051–1081; sequence DETGVMDNLLEALQSGAAFRDRRKRIPRNPD.

This sequence belongs to the formin homology family. Diaphanous subfamily. In terms of assembly, isoform 3 interacts with RHOD in the GTP-bound form. As to expression, expressed in testis, ovary, small intestine, prostate, lung, liver, kidney and leukocytes.

It is found in the cytoplasm. The protein resides in the cytosol. Its subcellular location is the early endosome. Could be involved in oogenesis. Involved in the regulation of endosome dynamics. Implicated in a novel signal transduction pathway, in which isoform 3 and CSK are sequentially activated by RHOD to regulate the motility of early endosomes through interactions with the actin cytoskeleton. The sequence is that of Protein diaphanous homolog 2 (DIAPH2) from Homo sapiens (Human).